The chain runs to 334 residues: Ornithine carbamoyltransferase subunit I (334 aa).

Residues 56 to 59 (STRT), Gln-83, Arg-107, and 134 to 137 (HPTQ) each bind carbamoyl phosphate. L-ornithine contacts are provided by residues Asn-168, Asp-232, and 236-237 (SM). A Zn(2+)-binding site is contributed by Cys-274. Residues 274-275 (CL) and Arg-320 contribute to the carbamoyl phosphate site.

The protein belongs to the aspartate/ornithine carbamoyltransferase superfamily. OTCase family. As to quaternary structure, in E.coli strain K12, trimer of identical or non-identical chains are composed of ArgI (I) and/or ArgF (F). The trimer has the following composition: FFI, FFF, FII, III. E.coli strains B and W, which are known to contain only ArgI, produce only a trimer of identical chains (III).

The protein resides in the cytoplasm. It carries out the reaction carbamoyl phosphate + L-ornithine = L-citrulline + phosphate + H(+). It participates in amino-acid biosynthesis; L-arginine biosynthesis; L-arginine from L-ornithine and carbamoyl phosphate: step 1/3. With respect to regulation, reversely inhibited by N-(N-Sulfodiaminophosphinyl)-L-ornithine. Zinc is an allosteric regulator of the substrate-bound enzyme and a competitive inhibitor of the free enzyme. Its function is as follows. Reversibly catalyzes the transfer of the carbamoyl group from carbamoyl phosphate (CP) to the N(epsilon) atom of ornithine (ORN) to produce L-citrulline, which is a substrate for argininosuccinate synthetase, the enzyme involved in the final step in arginine biosynthesis. The protein is Ornithine carbamoyltransferase subunit I of Escherichia coli (strain K12).